Reading from the N-terminus, the 575-residue chain is Transcription factor COE2 (575 aa).

The tract at residues 62–65 is interaction with DNA; it reads RKSN. The segment at 150-169 adopts a C5-type zinc-finger fold; that stretch reads CRVLLTHEVMCSRCCEKKSC. Interaction with DNA regions lie at residues 196–203 and 235–238; these read NCLKTAGN and NNSK. In terms of domain architecture, IPT/TIG spans 253–336; it reads PCIKAISPSE…KGAPGRFIYT (84 aa). A compositionally biased stretch (polar residues) spans 441–453; the sequence is STQGNNQGYIRNT. The segment at 441 to 479 is disordered; it reads STQGNNQGYIRNTSSISPRGYSSSSTPQQSNYSTSSNSM. Residues 454–479 show a composition bias toward low complexity; the sequence is SSISPRGYSSSSTPQQSNYSTSSNSM.

Belongs to the COE family. Forms either a homodimer or a heterodimer with a related family member. Interacts with SIX1.

It is found in the nucleus. In terms of biological role, transcription factor that, in osteoblasts, activates the decoy receptor for RANKL, TNFRSF11B, which in turn regulates osteoclast differentiation. Acts in synergy with the Wnt-responsive LEF1/CTNNB1 pathway. Recognizes variations of the palindromic sequence 5'-ATTCCCNNGGGAATT-3'. The chain is Transcription factor COE2 (EBF2) from Bos taurus (Bovine).